The chain runs to 149 residues: MHCPFCSAVDTKVIDSRLVGEGSQVRRRRQCLVCHERFTTFEVAELVLPRVIKSNEVREPFNEDKLRSGMLKALEKRPVSSDDVEMAINHIKSHLRATGEREVTTKMVGNLVMEALRKLDKVAYIRFASVYRSFEDIREFGEEIARLQD.

Residues 3 to 34 (CPFCSAVDTKVIDSRLVGEGSQVRRRRQCLVC) fold into a zinc finger. The ATP-cone domain occupies 49-139 (PRVIKSNEVR…VYRSFEDIRE (91 aa)).

Belongs to the NrdR family. Requires Zn(2+) as cofactor.

Its function is as follows. Negatively regulates transcription of bacterial ribonucleotide reductase nrd genes and operons by binding to NrdR-boxes. The protein is Transcriptional repressor NrdR of Pectobacterium atrosepticum (strain SCRI 1043 / ATCC BAA-672) (Erwinia carotovora subsp. atroseptica).